The following is a 610-amino-acid chain: Glutamine--fructose-6-phosphate aminotransferase [isomerizing] (610 aa).

Cys2 functions as the Nucleophile; for GATase activity in the catalytic mechanism. In terms of domain architecture, Glutamine amidotransferase type-2 spans 2–219 (CGIVGATSER…EGDVADINRT (218 aa)). SIS domains are found at residues 287-427 (AADI…YRGM) and 459-600 (LAQD…VDQP). Catalysis depends on Lys605, which acts as the For Fru-6P isomerization activity.

Homodimer.

The protein resides in the cytoplasm. It carries out the reaction D-fructose 6-phosphate + L-glutamine = D-glucosamine 6-phosphate + L-glutamate. Its function is as follows. Catalyzes the first step in hexosamine metabolism, converting fructose-6P into glucosamine-6P using glutamine as a nitrogen source. The chain is Glutamine--fructose-6-phosphate aminotransferase [isomerizing] from Idiomarina loihiensis (strain ATCC BAA-735 / DSM 15497 / L2-TR).